Here is a 178-residue protein sequence, read N- to C-terminus: Interleukin-10 (178 aa).

Positions 1 to 18 (MHSSALLCCLVLLTGVRA) are cleaved as a signal peptide. 2 cysteine pairs are disulfide-bonded: cysteine 30–cysteine 126 and cysteine 80–cysteine 132. A glycan (N-linked (GlcNAc...) asparagine) is linked at asparagine 134.

The protein belongs to the IL-10 family. As to quaternary structure, homodimer. Interacts with IL10RA and IL10RB.

It is found in the secreted. Its function is as follows. Major immune regulatory cytokine that acts on many cells of the immune system where it has profound anti-inflammatory functions, limiting excessive tissue disruption caused by inflammation. Mechanistically, IL10 binds to its heterotetrameric receptor comprising IL10RA and IL10RB leading to JAK1 and STAT2-mediated phosphorylation of STAT3. In turn, STAT3 translocates to the nucleus where it drives expression of anti-inflammatory mediators. Targets antigen-presenting cells (APCs) such as macrophages and monocytes and inhibits their release of pro-inflammatory cytokines including granulocyte-macrophage colony-stimulating factor /GM-CSF, granulocyte colony-stimulating factor/G-CSF, IL-1 alpha, IL-1 beta, IL-6, IL-8 and TNF-alpha. Also interferes with antigen presentation by reducing the expression of MHC-class II and co-stimulatory molecules, thereby inhibiting their ability to induce T cell activation. In addition, controls the inflammatory response of macrophages by reprogramming essential metabolic pathways including mTOR signaling. The chain is Interleukin-10 (IL10) from Macaca mulatta (Rhesus macaque).